A 494-amino-acid chain; its full sequence is Alpha-amylase-related protein (494 aa).

The signal sequence occupies residues 1–20 (MFKFASAVILCVVAASSTLA). Pyrrolidone carboxylic acid is present on glutamine 21. Cysteine 48 and cysteine 104 form a disulfide bridge. Ca(2+) is bound by residues asparagine 118, glutamine 169, and aspartate 178. A disulfide bond links cysteine 157 and cysteine 171. Arginine 206 lines the chloride pocket. The Nucleophile role is filled by aspartate 208. Ca(2+) is bound at residue histidine 212. Glutamate 245 functions as the Proton donor in the catalytic mechanism. 2 residues coordinate chloride: asparagine 308 and arginine 343. Cystine bridges form between cysteine 376–cysteine 382, cysteine 418–cysteine 441, and cysteine 448–cysteine 460.

Belongs to the glycosyl hydrolase 13 family. Monomer. Ca(2+) serves as cofactor. Requires chloride as cofactor.

Its subcellular location is the secreted. The catalysed reaction is Endohydrolysis of (1-&gt;4)-alpha-D-glucosidic linkages in polysaccharides containing three or more (1-&gt;4)-alpha-linked D-glucose units.. This Drosophila varians (Fruit fly) protein is Alpha-amylase-related protein (Amyrel).